We begin with the raw amino-acid sequence, 349 residues long: Pseudouridylate synthase TRUB1 (349 aa).

N-acetylalanine is present on A2. Phosphoserine is present on S11. D121 (nucleophile) is an active-site residue.

The protein belongs to the pseudouridine synthase TruB family. In terms of tissue distribution, highly expressed in heart, skeletal muscle and liver. Expressed at lower levels in lung, small intestine, kidney and spleen.

The protein localises to the nucleus. It is found in the cytoplasm. The protein resides in the cytosol. It carries out the reaction a uridine in mRNA = a pseudouridine in mRNA. The enzyme catalyses a uridine in tRNA = a pseudouridine in tRNA. The catalysed reaction is uridine(55) in tRNA = pseudouridine(55) in tRNA. In terms of biological role, pseudouridine synthase that catalyzes pseudouridylation of mRNAs and tRNAs. Mediates pseudouridylation of mRNAs with the consensus sequence 5'-GUUCNANNC-3', harboring a stem-loop structure. Constitutes the major pseudouridine synthase acting on mRNAs. Also catalyzes pseudouridylation of some tRNAs, including synthesis of pseudouridine(55) from uracil-55, in the psi GC loop of a subset of tRNAs. Promotes the processing of pri-let-7 microRNAs (pri-miRNAs) independently of its RNA pseudouridylate synthase activity. Acts by binding to the stem-loop structure on pri-let-7, preventing LIN28-binding (LIN28A and/or LIN28B), thereby enhancing the interaction between pri-let-7 and the microprocessor DGCR8, which mediates miRNA maturation. The sequence is that of Pseudouridylate synthase TRUB1 from Homo sapiens (Human).